A 263-amino-acid polypeptide reads, in one-letter code: Endonuclease 8 (263 aa).

The Schiff-base intermediate with DNA role is filled by Pro-2. Glu-3 (proton donor) is an active-site residue. The active-site Proton donor; for beta-elimination activity is the Lys-53. Gln-70, Arg-125, and Asn-169 together coordinate DNA. The segment at 229 to 263 (KLFHRDGEACERCGGIIEKTTLSSRPFYWCPHCQK) adopts an FPG-type zinc-finger fold. Arg-253 acts as the Proton donor; for delta-elimination activity in catalysis.

It belongs to the FPG family. Requires Zn(2+) as cofactor.

The catalysed reaction is 2'-deoxyribonucleotide-(2'-deoxyribose 5'-phosphate)-2'-deoxyribonucleotide-DNA = a 3'-end 2'-deoxyribonucleotide-(2,3-dehydro-2,3-deoxyribose 5'-phosphate)-DNA + a 5'-end 5'-phospho-2'-deoxyribonucleoside-DNA + H(+). In terms of biological role, involved in base excision repair of DNA damaged by oxidation or by mutagenic agents. Acts as a DNA glycosylase that recognizes and removes damaged bases. Has a preference for oxidized pyrimidines, such as thymine glycol, 5,6-dihydrouracil and 5,6-dihydrothymine. Has AP (apurinic/apyrimidinic) lyase activity and introduces nicks in the DNA strand. Cleaves the DNA backbone by beta-delta elimination to generate a single-strand break at the site of the removed base with both 3'- and 5'-phosphates. In Salmonella typhimurium (strain SL1344), this protein is Endonuclease 8.